Consider the following 167-residue polypeptide: Crossover junction endodeoxyribonuclease RuvC (167 aa).

Catalysis depends on residues Asp-8, Glu-67, and Asp-139. 3 residues coordinate Mg(2+): Asp-8, Glu-67, and Asp-139.

It belongs to the RuvC family. In terms of assembly, homodimer which binds Holliday junction (HJ) DNA. The HJ becomes 2-fold symmetrical on binding to RuvC with unstacked arms; it has a different conformation from HJ DNA in complex with RuvA. In the full resolvosome a probable DNA-RuvA(4)-RuvB(12)-RuvC(2) complex forms which resolves the HJ. Requires Mg(2+) as cofactor.

It localises to the cytoplasm. It carries out the reaction Endonucleolytic cleavage at a junction such as a reciprocal single-stranded crossover between two homologous DNA duplexes (Holliday junction).. Functionally, the RuvA-RuvB-RuvC complex processes Holliday junction (HJ) DNA during genetic recombination and DNA repair. Endonuclease that resolves HJ intermediates. Cleaves cruciform DNA by making single-stranded nicks across the HJ at symmetrical positions within the homologous arms, yielding a 5'-phosphate and a 3'-hydroxyl group; requires a central core of homology in the junction. The consensus cleavage sequence is 5'-(A/T)TT(C/G)-3'. Cleavage occurs on the 3'-side of the TT dinucleotide at the point of strand exchange. HJ branch migration catalyzed by RuvA-RuvB allows RuvC to scan DNA until it finds its consensus sequence, where it cleaves and resolves the cruciform DNA. This is Crossover junction endodeoxyribonuclease RuvC from Halorhodospira halophila (strain DSM 244 / SL1) (Ectothiorhodospira halophila (strain DSM 244 / SL1)).